We begin with the raw amino-acid sequence, 495 residues long: UDP-glycosyltransferase 73C10 (495 aa).

Residue His-24 is the Proton acceptor of the active site. An anthocyanidin is bound at residue His-24. Asp-129 acts as the Charge relay in catalysis. UDP-alpha-D-glucose contacts are provided by Gln-358, His-373, Trp-376, Asn-377, Ser-378, and Glu-381. Position 396 (Gly-396) interacts with an anthocyanidin. Residues Asp-397 and Gln-398 each contribute to the UDP-alpha-D-glucose site.

This sequence belongs to the UDP-glycosyltransferase family.

It catalyses the reaction oleanolate + UDP-alpha-D-glucose = oleanolate 3-O-beta-D-glucoside + UDP + H(+). In terms of biological role, catalyzes the transfer of a glucose (Glc) moiety from UDP-Glc to the C-3 position of the oleanane sapogenins oleanolate and hederagenin, and to the C-28 carboxylic group of the lupane sapogenin betulinate. The monoglucosylated hederagenin 3-O-beta-D-glucoside is a feeding deterrent of the yellow-striped flea beetle (Phyllotreta nemorum). The polypeptide is UDP-glycosyltransferase 73C10 (Barbarea vulgaris (Yellow rocket)).